A 223-amino-acid polypeptide reads, in one-letter code: Putative PAN domain-containing protein R486 (223 aa).

A signal peptide spans 1–23 (MSQTAIIIWIVVIIILLVLGGLG). Positions 39–73 (PTPINPPSSITPIQPINPPSSITPIQPSGPPSGGN) are disordered. The span at 45–64 (PSSITPIQPINPPSSITPIQ) shows a compositional bias: low complexity. PAN domains lie at 80–155 (CPAY…EDGC) and 159–223 (ARYN…KMPH). 2 disulfides stabilise this stretch: Cys-80–Cys-155 and Cys-109–Cys-131. N-linked (GlcNAc...) asparagine; by host glycosylation is found at Asn-162, Asn-189, and Asn-213. An intrachain disulfide couples Cys-182 to Cys-204.

The protein localises to the secreted. The protein resides in the virion. The sequence is that of Putative PAN domain-containing protein R486 from Acanthamoeba polyphaga mimivirus (APMV).